The following is a 335-amino-acid chain: Nucleoid-associated protein PputGB1_0980 (335 aa).

This sequence belongs to the YejK family.

It is found in the cytoplasm. The protein resides in the nucleoid. In Pseudomonas putida (strain GB-1), this protein is Nucleoid-associated protein PputGB1_0980.